Reading from the N-terminus, the 100-residue chain is Small ribosomal subunit protein uS14c (100 aa).

The protein belongs to the universal ribosomal protein uS14 family. As to quaternary structure, part of the 30S ribosomal subunit.

It is found in the plastid. It localises to the chloroplast. Binds 16S rRNA, required for the assembly of 30S particles. This is Small ribosomal subunit protein uS14c from Lobularia maritima (Sweet alyssum).